The following is a 380-amino-acid chain: S-phase entry cyclin-6 (380 aa).

Residues 63–91 (PRGKLQRDSTHLEKTRKRQLSNDSTDPIE) form a disordered region.

This sequence belongs to the cyclin family. Cyclin AB subfamily.

Its function is as follows. Involved in G1/S and or S phase progression. Interacts with CDC28. The polypeptide is S-phase entry cyclin-6 (CLB6) (Saccharomyces cerevisiae (strain ATCC 204508 / S288c) (Baker's yeast)).